Consider the following 341-residue polypeptide: Elongation factor Ts (341 aa).

The segment at Thr-80–Val-83 is involved in Mg(2+) ion dislocation from EF-Tu.

The protein belongs to the EF-Ts family.

It is found in the cytoplasm. Functionally, associates with the EF-Tu.GDP complex and induces the exchange of GDP to GTP. It remains bound to the aminoacyl-tRNA.EF-Tu.GTP complex up to the GTP hydrolysis stage on the ribosome. The protein is Elongation factor Ts of Lactobacillus gasseri (strain ATCC 33323 / DSM 20243 / BCRC 14619 / CIP 102991 / JCM 1131 / KCTC 3163 / NCIMB 11718 / NCTC 13722 / AM63).